Consider the following 226-residue polypeptide: MKELFLFSDMIMHSHTFNYLFHLILVAIIVLIVAKLATRSMQLVPRGSQNLLEAYLEGIVSMGRDVMGSDELARKYLPLVATIGLIVLTSNVIGIIPGFEAPSSSLNLTLCLALSVFLYYNFEGIRTQGIIKYFAHFMGPNKILAPLMFPIEIVSHLSRIVSLSFRLFGNIKGDDLFLMVVLSLAPWVAPLPAFALLTFMALLQTFIFMILTYVYLAGAVVVSEEH.

Helical transmembrane passes span 17-37 (FNYL…AKLA), 79-99 (LVAT…IPGF), 105-125 (SLNL…FEGI), 168-188 (FGNI…APWV), and 200-222 (MALL…AVVV).

Belongs to the ATPase A chain family. As to quaternary structure, F-type ATPases have 2 components, CF(1) - the catalytic core - and CF(0) - the membrane proton channel. CF(1) has five subunits: alpha(3), beta(3), gamma(1), delta(1), epsilon(1). CF(0) has three main subunits: a(1), b(2) and c(9-12). The alpha and beta chains form an alternating ring which encloses part of the gamma chain. CF(1) is attached to CF(0) by a central stalk formed by the gamma and epsilon chains, while a peripheral stalk is formed by the delta and b chains.

The protein resides in the cell inner membrane. Key component of the proton channel; it plays a direct role in the translocation of protons across the membrane. The protein is ATP synthase subunit a of Campylobacter fetus subsp. fetus (strain 82-40).